We begin with the raw amino-acid sequence, 87 residues long: Small ribosomal subunit protein bS20 (87 aa).

This sequence belongs to the bacterial ribosomal protein bS20 family.

Functionally, binds directly to 16S ribosomal RNA. This is Small ribosomal subunit protein bS20 from Rhizorhabdus wittichii (strain DSM 6014 / CCUG 31198 / JCM 15750 / NBRC 105917 / EY 4224 / RW1) (Sphingomonas wittichii).